The following is a 367-amino-acid chain: Ferredoxin--NADP reductase 2 (367 aa).

Positions 56, 64, 69, 109, 144, 309, and 350 each coordinate FAD.

Belongs to the ferredoxin--NADP reductase type 2 family. In terms of assembly, homodimer. Requires FAD as cofactor.

It carries out the reaction 2 reduced [2Fe-2S]-[ferredoxin] + NADP(+) + H(+) = 2 oxidized [2Fe-2S]-[ferredoxin] + NADPH. The sequence is that of Ferredoxin--NADP reductase 2 from Cupriavidus metallidurans (strain ATCC 43123 / DSM 2839 / NBRC 102507 / CH34) (Ralstonia metallidurans).